A 128-amino-acid polypeptide reads, in one-letter code: Fluoride-specific ion channel FluC (128 aa).

Helical transmembrane passes span 7-27 (AVLL…LIAV), 34-54 (TGFP…IGMI), 70-90 (LLLA…MYEI), and 104-124 (LYLI…MALA). Na(+)-binding residues include glycine 78 and threonine 81.

It belongs to the fluoride channel Fluc/FEX (TC 1.A.43) family.

The protein localises to the cell inner membrane. It catalyses the reaction fluoride(in) = fluoride(out). Na(+) is not transported, but it plays an essential structural role and its presence is essential for fluoride channel function. Fluoride-specific ion channel. Important for reducing fluoride concentration in the cell, thus reducing its toxicity. The protein is Fluoride-specific ion channel FluC of Prosthecochloris aestuarii (strain DSM 271 / SK 413).